The primary structure comprises 233 residues: Germin-like protein 3-7 (233 aa).

A signal peptide spans 1–35 (MSSSSSMECTGNMSAAPLLVLTVAVLAVLASTCAA). The cysteines at positions 44 and 63 are disulfide-linked. A Cupin type-1 domain is found at 77–225 (AGLAAAGSTD…SFQVDAEIIK (149 aa)). Mn(2+)-binding residues include His-125, His-127, Glu-132, and His-171. An N-linked (GlcNAc...) asparagine glycan is attached at Asn-178.

Belongs to the germin family. Oligomer (believed to be a pentamer but probably hexamer).

The protein localises to the secreted. The protein resides in the extracellular space. It localises to the apoplast. Functionally, may play a role in plant defense. Probably has no oxalate oxidase activity even if the active site is conserved. The chain is Germin-like protein 3-7 (GER7) from Oryza sativa subsp. japonica (Rice).